The chain runs to 340 residues: Fructoselysine 6-phosphate deglycase (340 aa).

SIS domains lie at I35–P169 and L201–R331.

Homododecamer.

It carries out the reaction N(6)-(6-phospho-D-fructosyl)-L-lysine + H2O = D-glucose 6-phosphate + L-lysine. It functions in the pathway carbohydrate metabolism; fructoselysine degradation; D-glucose 6-phosphate and lysine from fructoselysine: step 2/2. In terms of biological role, catalyzes the reversible conversion of fructoselysine 6-phosphate to glucose 6-phosphate and lysine. Functions in a fructoselysine degradation pathway that allows E.coli to grow on fructoselysine or psicoselysine. The protein is Fructoselysine 6-phosphate deglycase (frlB) of Escherichia coli O157:H7.